The primary structure comprises 348 residues: Peroxidase 40 (348 aa).

An N-terminal signal peptide occupies residues Met-1–Ser-21. Asn-26 carries N-linked (GlcNAc...) asparagine glycosylation. 4 cysteine pairs are disulfide-bonded: Cys-59-Cys-139, Cys-92-Cys-97, Cys-145-Cys-344, and Cys-224-Cys-256. The active-site Proton acceptor is His-90. The Ca(2+) site is built by Asp-91, Val-94, Gly-96, Asp-98, and Ser-100. Residues Gly-170–Pro-189 are disordered. The segment covering Ala-177–Pro-189 has biased composition (polar residues). Pro-187 is a binding site for substrate. Asn-190 carries N-linked (GlcNAc...) asparagine glycosylation. Position 217 (His-217) interacts with heme b. A Ca(2+)-binding site is contributed by Thr-218. Positions 269, 272, and 277 each coordinate Ca(2+).

It belongs to the peroxidase family. Classical plant (class III) peroxidase subfamily. The cofactor is heme b. Requires Ca(2+) as cofactor.

Its subcellular location is the secreted. It carries out the reaction 2 a phenolic donor + H2O2 = 2 a phenolic radical donor + 2 H2O. Removal of H(2)O(2), oxidation of toxic reductants, biosynthesis and degradation of lignin, suberization, auxin catabolism, response to environmental stresses such as wounding, pathogen attack and oxidative stress. These functions might be dependent on each isozyme/isoform in each plant tissue. The chain is Peroxidase 40 (PER40) from Arabidopsis thaliana (Mouse-ear cress).